Here is a 484-residue protein sequence, read N- to C-terminus: Chromosomal replication initiator protein DnaA (484 aa).

The domain I, interacts with DnaA modulators stretch occupies residues 1–73 (MQEGKNIWSL…EILIEKGHNT (73 aa)). The segment at 73-140 (TINVEFINSP…EEIHTKYRNP (68 aa)) is domain II. The segment at 141–357 (FLKKKYTFEN…AAVTKLKAHI (217 aa)) is domain III, AAA+ region. The ATP site is built by Gly-185, Gly-187, Lys-188, and Thr-189. Residues 358–484 (DLEDIEIDTS…IELMNKINKK (127 aa)) are domain IV, binds dsDNA.

This sequence belongs to the DnaA family. Oligomerizes as a right-handed, spiral filament on DNA at oriC.

The protein localises to the cytoplasm. In terms of biological role, plays an essential role in the initiation and regulation of chromosomal replication. ATP-DnaA binds to the origin of replication (oriC) to initiate formation of the DNA replication initiation complex once per cell cycle. Binds the DnaA box (a 9 base pair repeat at the origin) and separates the double-stranded (ds)DNA. Forms a right-handed helical filament on oriC DNA; dsDNA binds to the exterior of the filament while single-stranded (ss)DNA is stabiized in the filament's interior. The ATP-DnaA-oriC complex binds and stabilizes one strand of the AT-rich DNA unwinding element (DUE), permitting loading of DNA polymerase. After initiation quickly degrades to an ADP-DnaA complex that is not apt for DNA replication. Binds acidic phospholipids. The polypeptide is Chromosomal replication initiator protein DnaA (Borrelia hermsii (strain HS1 / DAH)).